We begin with the raw amino-acid sequence, 412 residues long: Phytoene synthase, chloroplastic (412 aa).

Belongs to the phytoene/squalene synthase family. Monomer. In terms of tissue distribution, expressed in roots, leaves, flower buds, sepals, petals, lips and lip crests.

The protein resides in the plastid. It localises to the chloroplast. The catalysed reaction is 2 (2E,6E,10E)-geranylgeranyl diphosphate = 15-cis-phytoene + 2 diphosphate. It participates in carotenoid biosynthesis; phytoene biosynthesis; all-trans-phytoene from geranylgeranyl diphosphate: step 1/1. Its function is as follows. Catalyzes the reaction from prephytoene diphosphate to phytoene. The sequence is that of Phytoene synthase, chloroplastic (PSY) from Oncidium hybrid cultivar (Orchid).